The following is a 78-amino-acid chain: UPF0369 protein RF_1112 (78 aa).

Belongs to the SDHAF4 family.

This chain is UPF0369 protein RF_1112, found in Rickettsia felis (strain ATCC VR-1525 / URRWXCal2) (Rickettsia azadi).